The sequence spans 45 residues: Photosystem II reaction center protein K (45 aa).

Positions 1–8 (MELMLLFA) are excised as a propeptide. The chain crosses the membrane as a helical span at residues 24–44 (LPVIPVLFLALAFVWQASVGF).

It belongs to the PsbK family. In terms of assembly, PSII is composed of 1 copy each of membrane proteins PsbA, PsbB, PsbC, PsbD, PsbE, PsbF, PsbH, PsbI, PsbJ, PsbK, PsbL, PsbM, PsbT, PsbX, PsbY, PsbZ, Psb30/Ycf12, peripheral proteins PsbO, CyanoQ (PsbQ), PsbU, PsbV and a large number of cofactors. It forms dimeric complexes.

It localises to the cellular thylakoid membrane. Functionally, one of the components of the core complex of photosystem II (PSII). PSII is a light-driven water:plastoquinone oxidoreductase that uses light energy to abstract electrons from H(2)O, generating O(2) and a proton gradient subsequently used for ATP formation. It consists of a core antenna complex that captures photons, and an electron transfer chain that converts photonic excitation into a charge separation. The sequence is that of Photosystem II reaction center protein K from Cyanothece sp. (strain PCC 7425 / ATCC 29141).